The following is a 290-amino-acid chain: Non-homologous end joining protein Ku (290 aa).

A Ku domain is found at 11–183 (TFGLISMPVR…EAPKITSEVK (173 aa)). Residues 253 to 290 (MKDQKKGSRLAEVDKESTVQMTPKKPAVKERRGRKRVA) are disordered. Over residues 254–269 (KDQKKGSRLAEVDKES) the composition is skewed to basic and acidic residues.

The protein belongs to the prokaryotic Ku family. As to quaternary structure, homodimer. Interacts with LigD.

Its function is as follows. With LigD forms a non-homologous end joining (NHEJ) DNA repair enzyme, which repairs dsDNA breaks with reduced fidelity. Binds linear dsDNA with 5'- and 3'- overhangs but not closed circular dsDNA nor ssDNA. Recruits and stimulates the ligase activity of LigD. This is Non-homologous end joining protein Ku from Koribacter versatilis (strain Ellin345).